A 130-amino-acid polypeptide reads, in one-letter code: DNA-binding protein HU (130 aa).

This sequence belongs to the bacterial histone-like protein family.

In terms of biological role, histone-like DNA-binding protein which is capable of wrapping DNA to stabilize it, and thus to prevent its denaturation under extreme environmental conditions. The sequence is that of DNA-binding protein HU (hup) from Ureaplasma parvum serovar 3 (strain ATCC 700970).